Reading from the N-terminus, the 529-residue chain is UDP-glucuronosyltransferase 2B9 (529 aa).

An N-terminal signal peptide occupies residues 1–21 (MSVKWTSVILLIQLSFYFSSG). 3 N-linked (GlcNAc...) asparagine glycosylation sites follow: N67, N68, and N88. The helical transmembrane segment at 494–514 (IGFLLACVATVIFVIMKCCLF) threads the bilayer.

This sequence belongs to the UDP-glycosyltransferase family.

Its subcellular location is the microsome membrane. It is found in the endoplasmic reticulum membrane. The catalysed reaction is glucuronate acceptor + UDP-alpha-D-glucuronate = acceptor beta-D-glucuronoside + UDP + H(+). UDPGT is of major importance in the conjugation and subsequent elimination of potentially toxic xenobiotics and endogenous compounds. This isozyme is active on C18, C19, and C21 steroids, bile acids, and several xenobiotics including eugenol, 1-naphthol, and p-nitrophenol. In Macaca fascicularis (Crab-eating macaque), this protein is UDP-glucuronosyltransferase 2B9 (UGT2B9).